A 337-amino-acid chain; its full sequence is tRNA N6-adenosine threonylcarbamoyltransferase (337 aa).

Residues His-111 and His-115 each contribute to the Fe cation site. Substrate contacts are provided by residues 134–138 (LVSGG), Asp-167, Gly-180, and Asn-272. Residue Asp-300 participates in Fe cation binding.

This sequence belongs to the KAE1 / TsaD family. Fe(2+) serves as cofactor.

Its subcellular location is the cytoplasm. The enzyme catalyses L-threonylcarbamoyladenylate + adenosine(37) in tRNA = N(6)-L-threonylcarbamoyladenosine(37) in tRNA + AMP + H(+). Its function is as follows. Required for the formation of a threonylcarbamoyl group on adenosine at position 37 (t(6)A37) in tRNAs that read codons beginning with adenine. Is involved in the transfer of the threonylcarbamoyl moiety of threonylcarbamoyl-AMP (TC-AMP) to the N6 group of A37, together with TsaE and TsaB. TsaD likely plays a direct catalytic role in this reaction. The polypeptide is tRNA N6-adenosine threonylcarbamoyltransferase (Escherichia coli (strain SMS-3-5 / SECEC)).